A 635-amino-acid chain; its full sequence is Threonine--tRNA ligase (635 aa).

The TGS domain maps to Met1–Thr61. A catalytic region spans residues Asp242–Pro532. Residues Cys333, His384, and His509 each contribute to the Zn(2+) site.

Belongs to the class-II aminoacyl-tRNA synthetase family. As to quaternary structure, homodimer. It depends on Zn(2+) as a cofactor.

The protein localises to the cytoplasm. It carries out the reaction tRNA(Thr) + L-threonine + ATP = L-threonyl-tRNA(Thr) + AMP + diphosphate + H(+). In terms of biological role, catalyzes the attachment of threonine to tRNA(Thr) in a two-step reaction: L-threonine is first activated by ATP to form Thr-AMP and then transferred to the acceptor end of tRNA(Thr). Also edits incorrectly charged L-seryl-tRNA(Thr). This chain is Threonine--tRNA ligase, found in Clostridium botulinum (strain 657 / Type Ba4).